The sequence spans 88 residues: Small ribosomal subunit protein bS20 (88 aa).

Belongs to the bacterial ribosomal protein bS20 family.

Functionally, binds directly to 16S ribosomal RNA. The sequence is that of Small ribosomal subunit protein bS20 from Methylorubrum extorquens (strain CM4 / NCIMB 13688) (Methylobacterium extorquens).